A 222-amino-acid chain; its full sequence is Extracellular protein ARB_03106 (222 aa).

The first 18 residues, 1–18 (MRLHSVLAVATAVGCAVA), serve as a signal peptide directing secretion. Residues N113 and N126 are each glycosylated (N-linked (GlcNAc...) asparagine).

It localises to the secreted. This Arthroderma benhamiae (strain ATCC MYA-4681 / CBS 112371) (Trichophyton mentagrophytes) protein is Extracellular protein ARB_03106.